The sequence spans 508 residues: Light-independent protochlorophyllide reductase subunit B (508 aa).

Asp-36 contributes to the [4Fe-4S] cluster binding site. The active-site Proton donor is Asp-294. Position 429-430 (429-430) interacts with substrate; the sequence is GM.

Belongs to the ChlB/BchB/BchZ family. As to quaternary structure, protochlorophyllide reductase is composed of three subunits; ChlL, ChlN and ChlB. Forms a heterotetramer of two ChlB and two ChlN subunits. [4Fe-4S] cluster is required as a cofactor.

It carries out the reaction chlorophyllide a + oxidized 2[4Fe-4S]-[ferredoxin] + 2 ADP + 2 phosphate = protochlorophyllide a + reduced 2[4Fe-4S]-[ferredoxin] + 2 ATP + 2 H2O. It functions in the pathway porphyrin-containing compound metabolism; chlorophyll biosynthesis (light-independent). Functionally, component of the dark-operative protochlorophyllide reductase (DPOR) that uses Mg-ATP and reduced ferredoxin to reduce ring D of protochlorophyllide (Pchlide) to form chlorophyllide a (Chlide). This reaction is light-independent. The NB-protein (ChlN-ChlB) is the catalytic component of the complex. In Picosynechococcus sp. (strain ATCC 27264 / PCC 7002 / PR-6) (Agmenellum quadruplicatum), this protein is Light-independent protochlorophyllide reductase subunit B.